The following is a 231-amino-acid chain: Enolase-phosphatase E1 (231 aa).

Residues Asp-11 and Glu-13 each coordinate Mg(2+). Substrate contacts are provided by residues 125-126 and Lys-162; that span reads SS. Asp-188 contacts Mg(2+).

This sequence belongs to the HAD-like hydrolase superfamily. MasA/MtnC family. In terms of assembly, monomer. Mg(2+) serves as cofactor.

The protein localises to the cytoplasm. Its subcellular location is the nucleus. The enzyme catalyses 5-methylsulfanyl-2,3-dioxopentyl phosphate + H2O = 1,2-dihydroxy-5-(methylsulfanyl)pent-1-en-3-one + phosphate. It functions in the pathway amino-acid biosynthesis; L-methionine biosynthesis via salvage pathway; L-methionine from S-methyl-5-thio-alpha-D-ribose 1-phosphate: step 3/6. Its pathway is amino-acid biosynthesis; L-methionine biosynthesis via salvage pathway; L-methionine from S-methyl-5-thio-alpha-D-ribose 1-phosphate: step 4/6. In terms of biological role, bifunctional enzyme that catalyzes the enolization of 2,3-diketo-5-methylthiopentyl-1-phosphate (DK-MTP-1-P) into the intermediate 2-hydroxy-3-keto-5-methylthiopentenyl-1-phosphate (HK-MTPenyl-1-P), which is then dephosphorylated to form the acireductone 1,2-dihydroxy-3-keto-5-methylthiopentene (DHK-MTPene). The polypeptide is Enolase-phosphatase E1 (Pyricularia oryzae (strain 70-15 / ATCC MYA-4617 / FGSC 8958) (Rice blast fungus)).